A 247-amino-acid polypeptide reads, in one-letter code: MDAFTRFTNQTQGRDRLFRATQYTCMLLRYLLEPKAGKEKVVMKLKKLESSVSTGRKWFRLGNVVHAIQATEQSIHATDLVPRLCLTLANLNRVIYFICDTILWVRSVGLTSGINKEKWRTRAAHHYYYSLLLSLVRDLYEISLQMKRVTCDRAKKEKSASQDPLWFSVAEEETEWLQSFLLLLFRSLKQHPPLLLDTVKNLCDILNPLDQLGIYKSNPGIIGLGGLVSSIAGMITVAYPQMKLKTR.

Residues 1–83 (MDAFTRFTNQ…SIHATDLVPR (83 aa)) lie on the Cytoplasmic side of the membrane. The chain crosses the membrane as a helical span at residues 84 to 105 (LCLTLANLNRVIYFICDTILWV). At 106 to 219 (RSVGLTSGIN…DQLGIYKSNP (114 aa)) the chain is on the lumenal side. The helical transmembrane segment at 220–239 (GIIGLGGLVSSIAGMITVAY) threads the bilayer. Residues 220-239 (GIIGLGGLVSSIAGMITVAY) form a required for homodimerization, interaction with PEX11G, and peroxisomal localization region. Over 240–247 (PQMKLKTR) the chain is Cytoplasmic.

Belongs to the peroxin-11 family. As to quaternary structure, homodimer. Heterodimer with PEX11G. Probably interacts with COPB2 and COPA. Interacts with PEX19. Interacts with FIS1. In terms of processing, seems not to be N-glycosylated.

It is found in the peroxisome membrane. Its function is as follows. May be involved in peroxisomal proliferation and may regulate peroxisomes division. May mediate binding of coatomer proteins to the peroxisomal membrane. Promotes membrane protrusion and elongation on the peroxisomal surface. The chain is Peroxisomal membrane protein 11A (PEX11A) from Homo sapiens (Human).